A 249-amino-acid chain; its full sequence is 2,3-bisphosphoglycerate-dependent phosphoglycerate mutase (249 aa).

Substrate contacts are provided by residues 10-17 (RHGESEWN), 23-24 (TG), R62, 89-92 (ERHY), K100, 116-117 (RR), and 185-186 (GN). Residue H11 is the Tele-phosphohistidine intermediate of the active site. Catalysis depends on E89, which acts as the Proton donor/acceptor.

This sequence belongs to the phosphoglycerate mutase family. BPG-dependent PGAM subfamily. As to quaternary structure, homodimer.

The catalysed reaction is (2R)-2-phosphoglycerate = (2R)-3-phosphoglycerate. It functions in the pathway carbohydrate degradation; glycolysis; pyruvate from D-glyceraldehyde 3-phosphate: step 3/5. Catalyzes the interconversion of 2-phosphoglycerate and 3-phosphoglycerate. In Hamiltonella defensa subsp. Acyrthosiphon pisum (strain 5AT), this protein is 2,3-bisphosphoglycerate-dependent phosphoglycerate mutase.